Here is a 501-residue protein sequence, read N- to C-terminus: Cytochrome P450 4d2 (501 aa).

Residues Glu311 and Cys449 each contribute to the heme site.

This sequence belongs to the cytochrome P450 family. Requires heme as cofactor.

Its subcellular location is the endoplasmic reticulum membrane. It is found in the microsome membrane. Its function is as follows. Involved in the metabolism of insect hormones and in the breakdown of synthetic insecticides. In Drosophila melanogaster (Fruit fly), this protein is Cytochrome P450 4d2 (Cyp4d2).